The sequence spans 433 residues: Chaperone SurA (433 aa).

The signal sequence occupies residues 1-28; the sequence is MTAITRITLTGALLAAALLLAALQPARA. 2 consecutive PpiC domains span residues 174 to 277 and 286 to 386; these read NQEY…KLMD and VTET…QVTD.

The protein localises to the periplasm. It catalyses the reaction [protein]-peptidylproline (omega=180) = [protein]-peptidylproline (omega=0). Its function is as follows. Chaperone involved in the correct folding and assembly of outer membrane proteins. Recognizes specific patterns of aromatic residues and the orientation of their side chains, which are found more frequently in integral outer membrane proteins. May act in both early periplasmic and late outer membrane-associated steps of protein maturation. This Alkalilimnicola ehrlichii (strain ATCC BAA-1101 / DSM 17681 / MLHE-1) protein is Chaperone SurA.